Consider the following 260-residue polypeptide: Thiazole synthase (260 aa).

The active-site Schiff-base intermediate with DXP is the Lys100. Residues Gly161, 187 to 188 (AG), and 209 to 210 (NT) contribute to the 1-deoxy-D-xylulose 5-phosphate site.

Belongs to the ThiG family. Homotetramer. Forms heterodimers with either ThiH or ThiS.

The protein localises to the cytoplasm. The catalysed reaction is [ThiS sulfur-carrier protein]-C-terminal-Gly-aminoethanethioate + 2-iminoacetate + 1-deoxy-D-xylulose 5-phosphate = [ThiS sulfur-carrier protein]-C-terminal Gly-Gly + 2-[(2R,5Z)-2-carboxy-4-methylthiazol-5(2H)-ylidene]ethyl phosphate + 2 H2O + H(+). It participates in cofactor biosynthesis; thiamine diphosphate biosynthesis. In terms of biological role, catalyzes the rearrangement of 1-deoxy-D-xylulose 5-phosphate (DXP) to produce the thiazole phosphate moiety of thiamine. Sulfur is provided by the thiocarboxylate moiety of the carrier protein ThiS. In vitro, sulfur can be provided by H(2)S. The polypeptide is Thiazole synthase (Dechloromonas aromatica (strain RCB)).